A 109-amino-acid polypeptide reads, in one-letter code: uncharacterized protein (109 aa).

This is an uncharacterized protein from Saccharomyces cerevisiae (strain ATCC 204508 / S288c) (Baker's yeast).